We begin with the raw amino-acid sequence, 202 residues long: ATP-dependent Clp protease proteolytic subunit 1 (202 aa).

Catalysis depends on serine 102, which acts as the Nucleophile. The active site involves histidine 127.

Belongs to the peptidase S14 family. Fourteen ClpP subunits assemble into 2 heptameric rings which stack back to back to give a disk-like structure with a central cavity, resembling the structure of eukaryotic proteasomes.

Its subcellular location is the cytoplasm. It carries out the reaction Hydrolysis of proteins to small peptides in the presence of ATP and magnesium. alpha-casein is the usual test substrate. In the absence of ATP, only oligopeptides shorter than five residues are hydrolyzed (such as succinyl-Leu-Tyr-|-NHMec, and Leu-Tyr-Leu-|-Tyr-Trp, in which cleavage of the -Tyr-|-Leu- and -Tyr-|-Trp bonds also occurs).. Functionally, cleaves peptides in various proteins in a process that requires ATP hydrolysis. Has a chymotrypsin-like activity. Plays a major role in the degradation of misfolded proteins. In Agrobacterium fabrum (strain C58 / ATCC 33970) (Agrobacterium tumefaciens (strain C58)), this protein is ATP-dependent Clp protease proteolytic subunit 1.